The primary structure comprises 296 residues: Small ribosomal subunit biogenesis GTPase RsgA (296 aa).

The 162-residue stretch at 63–224 folds into the CP-type G domain; that stretch reads KNQLVRPMVA…IADTPGFSSY (162 aa). GTP-binding positions include 112–115 and 167–175; these read SKTD and GQTGAGKST. Residues C248, C253, H255, and C261 each contribute to the Zn(2+) site.

The protein belongs to the TRAFAC class YlqF/YawG GTPase family. RsgA subfamily. Monomer. Associates with 30S ribosomal subunit, binds 16S rRNA. Requires Zn(2+) as cofactor.

It localises to the cytoplasm. Functionally, one of several proteins that assist in the late maturation steps of the functional core of the 30S ribosomal subunit. Helps release RbfA from mature subunits. May play a role in the assembly of ribosomal proteins into the subunit. Circularly permuted GTPase that catalyzes slow GTP hydrolysis, GTPase activity is stimulated by the 30S ribosomal subunit. The sequence is that of Small ribosomal subunit biogenesis GTPase RsgA from Limosilactobacillus fermentum (strain NBRC 3956 / LMG 18251) (Lactobacillus fermentum).